Here is a 293-residue protein sequence, read N- to C-terminus: Ribonuclease HIII (293 aa).

The RNase H type-2 domain occupies Leu78 to Arg293. A divalent metal cation is bound by residues Asp84, Glu85, and Asp187.

It belongs to the RNase HII family. RnhC subfamily. Mn(2+) serves as cofactor. The cofactor is Mg(2+).

The protein resides in the cytoplasm. It carries out the reaction Endonucleolytic cleavage to 5'-phosphomonoester.. Endonuclease that specifically degrades the RNA of RNA-DNA hybrids. The sequence is that of Ribonuclease HIII from Streptococcus pneumoniae (strain JJA).